A 436-amino-acid polypeptide reads, in one-letter code: Probable protein phosphatase 2C 15 (436 aa).

A PPM-type phosphatase domain is found at 30-302 (KAAKMEKPIV…DDTTCIVVDI (273 aa)). Residues aspartate 78, glycine 79, aspartate 254, and aspartate 293 each coordinate Mn(2+).

This sequence belongs to the PP2C family. It depends on Mg(2+) as a cofactor. Requires Mn(2+) as cofactor.

The catalysed reaction is O-phospho-L-seryl-[protein] + H2O = L-seryl-[protein] + phosphate. It catalyses the reaction O-phospho-L-threonyl-[protein] + H2O = L-threonyl-[protein] + phosphate. In Arabidopsis thaliana (Mouse-ear cress), this protein is Probable protein phosphatase 2C 15.